Consider the following 224-residue polypeptide: Putative endoglucanase X (224 aa).

The disordered stretch occupies residues 147-168 (QTQPTPSPSPTPTDSPLVKKGD). The Dockerin domain occupies 162–224 (PLVKKGDVNL…SILKRILLRN (63 aa)).

It catalyses the reaction Endohydrolysis of (1-&gt;4)-beta-D-glucosidic linkages in cellulose, lichenin and cereal beta-D-glucans.. Functionally, this enzyme catalyzes the endohydrolysis of 1,4-beta-glucosidic linkages in cellulose, lichenin and cereal beta-D-glucans. In Acetivibrio thermocellus (Hungateiclostridium thermocellum), this protein is Putative endoglucanase X (celX).